A 391-amino-acid polypeptide reads, in one-letter code: Casein kinase II subunit alpha 3 (391 aa).

The region spanning 39-324 (YQLVRKLGRG…AREAMEHPYF (286 aa)) is the Protein kinase domain. ATP contacts are provided by residues 45–53 (LGRGKYSEV) and Lys-68. Residue Asp-156 is the Proton acceptor of the active site.

The protein belongs to the protein kinase superfamily. Ser/Thr protein kinase family. CK2 subfamily. As to quaternary structure, heterotetramer composed of two catalytic subunits (alpha chain and/or alpha' chain) and two regulatory subunits (beta chains). Interacts with PML. As to expression, detected in blood platelets and megakaryocyte cell lines. Poorly expressed in lung. Highly expressed in lung tumor tissues.

The enzyme catalyses L-seryl-[protein] + ATP = O-phospho-L-seryl-[protein] + ADP + H(+). It carries out the reaction L-threonyl-[protein] + ATP = O-phospho-L-threonyl-[protein] + ADP + H(+). In terms of biological role, probable catalytic subunit of a constitutively active serine/threonine-protein kinase complex that phosphorylates a large number of substrates containing acidic residues C-terminal to the phosphorylated serine or threonine. Amplification-dependent oncogene; promotes cell proliferation and tumorigenesis by down-regulating expression of the tumor suppressor protein, PML. May play a role in the pathogenesis of the lung cancer development and progression. The polypeptide is Casein kinase II subunit alpha 3 (CSNK2A3) (Homo sapiens (Human)).